The following is a 248-amino-acid chain: 7-cyano-7-deazaguanine synthase (248 aa).

22–32 serves as a coordination point for ATP; that stretch reads LSGGLDSTTCL. Residues Cys216, Cys225, Cys228, and Cys231 each contribute to the Zn(2+) site.

Belongs to the QueC family. It depends on Zn(2+) as a cofactor.

It catalyses the reaction 7-carboxy-7-deazaguanine + NH4(+) + ATP = 7-cyano-7-deazaguanine + ADP + phosphate + H2O + H(+). It functions in the pathway purine metabolism; 7-cyano-7-deazaguanine biosynthesis. Functionally, catalyzes the ATP-dependent conversion of 7-carboxy-7-deazaguanine (CDG) to 7-cyano-7-deazaguanine (preQ(0)). In Leptospira biflexa serovar Patoc (strain Patoc 1 / Ames), this protein is 7-cyano-7-deazaguanine synthase.